We begin with the raw amino-acid sequence, 151 residues long: Urease accessory protein UreE (151 aa).

It belongs to the UreE family.

The protein resides in the cytoplasm. Functionally, involved in urease metallocenter assembly. Binds nickel. Probably functions as a nickel donor during metallocenter assembly. The chain is Urease accessory protein UreE from Bacillus cereus (strain ATCC 10987 / NRS 248).